We begin with the raw amino-acid sequence, 258 residues long: UPF0246 protein plu0566 (258 aa).

This sequence belongs to the UPF0246 family.

This chain is UPF0246 protein plu0566, found in Photorhabdus laumondii subsp. laumondii (strain DSM 15139 / CIP 105565 / TT01) (Photorhabdus luminescens subsp. laumondii).